A 263-amino-acid chain; its full sequence is Flagellar brake protein YcgR (263 aa).

The interval 1–21 (MAELSTPSPASPAPLDGGRGD) is disordered. The PilZ domain occupies 133–250 (QRREFYRLQV…DTRIQRYIFK (118 aa)).

This sequence belongs to the YcgR family. Monomer. Interacts with the flagellar basal bodies.

It is found in the bacterial flagellum basal body. Functionally, acts as a flagellar brake, regulating swimming and swarming in a bis-(3'-5') cyclic diguanylic acid (c-di-GMP)-dependent manner. Binds 1 c-di-GMP dimer per subunit. Increasing levels of c-di-GMP lead to decreased motility. In Thauera aminoaromatica, this protein is Flagellar brake protein YcgR.